A 357-amino-acid polypeptide reads, in one-letter code: Nicotinate-nucleotide--dimethylbenzimidazole phosphoribosyltransferase (357 aa).

The active-site Proton acceptor is the E323.

Belongs to the CobT family.

The catalysed reaction is 5,6-dimethylbenzimidazole + nicotinate beta-D-ribonucleotide = alpha-ribazole 5'-phosphate + nicotinate + H(+). Its pathway is nucleoside biosynthesis; alpha-ribazole biosynthesis; alpha-ribazole from 5,6-dimethylbenzimidazole: step 1/2. In terms of biological role, catalyzes the synthesis of alpha-ribazole-5'-phosphate from nicotinate mononucleotide (NAMN) and 5,6-dimethylbenzimidazole (DMB). The polypeptide is Nicotinate-nucleotide--dimethylbenzimidazole phosphoribosyltransferase (Nitratidesulfovibrio vulgaris (strain ATCC 29579 / DSM 644 / CCUG 34227 / NCIMB 8303 / VKM B-1760 / Hildenborough) (Desulfovibrio vulgaris)).